Reading from the N-terminus, the 302-residue chain is Sulfate adenylyltransferase subunit 2 (302 aa).

The tract at residues 280–302 (RQGRLIDSDQSASMEQKKRQGYF) is disordered.

Belongs to the PAPS reductase family. CysD subfamily. Heterodimer composed of CysD, the smaller subunit, and CysN.

The catalysed reaction is sulfate + ATP + H(+) = adenosine 5'-phosphosulfate + diphosphate. The protein operates within sulfur metabolism; hydrogen sulfide biosynthesis; sulfite from sulfate: step 1/3. With CysN forms the ATP sulfurylase (ATPS) that catalyzes the adenylation of sulfate producing adenosine 5'-phosphosulfate (APS) and diphosphate, the first enzymatic step in sulfur assimilation pathway. APS synthesis involves the formation of a high-energy phosphoric-sulfuric acid anhydride bond driven by GTP hydrolysis by CysN coupled to ATP hydrolysis by CysD. This Shewanella oneidensis (strain ATCC 700550 / JCM 31522 / CIP 106686 / LMG 19005 / NCIMB 14063 / MR-1) protein is Sulfate adenylyltransferase subunit 2.